A 1207-amino-acid polypeptide reads, in one-letter code: Chromosomal serine/threonine-protein kinase JIL-1 (1207 aa).

Polar residues predominate over residues 1 to 19 (MSRLQKQNYEILSGTSTSR). 3 disordered regions span residues 1-119 (MSRL…ASAR), 164-183 (QDMEEDEPNGIEIDESSSSL), and 210-230 (SSSTTPSYAMPTSNSTPLDLD). A phosphoserine mark is found at Ser29 and Ser31. Polar residues predominate over residues 45–69 (LNGQLVANGNGKTRKNSNSETMTNG). Over residues 88–97 (NYNNNNNNNN) the composition is skewed to low complexity. The segment covering 98-108 (SISATNGQYTN) has biased composition (polar residues). Residues 109 to 118 (SSSKTTSASA) are compositionally biased toward low complexity. Positions 164–178 (QDMEEDEPNGIEIDE) are enriched in acidic residues. The segment covering 213-226 (TTPSYAMPTSNSTP) has biased composition (polar residues). Residues 261 to 530 (FKIIRVLGTG…ASEIKEHPFF (270 aa)) enclose the Protein kinase 1 domain. Residues 267-275 (LGTGAYGRV) and Lys293 each bind ATP. Catalysis depends on Asp389, which acts as the Proton acceptor. A Phosphoserine modification is found at Ser424. The region spanning 531–599 (NGINWQELRT…VAPEHLEQMR (69 aa)) is the AGC-kinase C-terminal domain. Thr588 carries the phosphothreonine modification. The Protein kinase 2 domain occupies 623 to 886 (LELGTRTSNG…LSDILDSEWL (264 aa)). Residues 629–637 (TSNGAYGTC) and Lys652 each bind ATP. The Proton acceptor role is filled by Asp739. The residue at position 1045 (Thr1045) is a Phosphothreonine. Phosphoserine is present on Ser1047. Positions 1168–1197 (TFPRPKAQLKRTKREPKVPRPPTRVQPERA) are disordered.

Belongs to the protein kinase superfamily. Ser/Thr protein kinase family. As to quaternary structure, interacts with lola. Interacts with proteins of the male specific lethal (MSL) dosage compensation complex; this interaction is mediated by the kinase domains. It depends on Mg(2+) as a cofactor. Post-translationally, autophosphorylated in vitro.

The protein localises to the nucleus. The protein resides in the chromosome. It carries out the reaction L-seryl-[protein] + ATP = O-phospho-L-seryl-[protein] + ADP + H(+). It catalyses the reaction L-threonyl-[protein] + ATP = O-phospho-L-threonyl-[protein] + ADP + H(+). Its function is as follows. Phosphorylates 'Ser-10' of histone H3. May regulate gene expression by establishing or maintaining the structure of more open chromatin regions. Also required for normal polytene chromosome structure, for oogenesis and for viability throughout development. Regulates the structure of polytene chromosomes in salivary glands. May phosphorylate 'Ser-1' of histone H2A. This chain is Chromosomal serine/threonine-protein kinase JIL-1, found in Drosophila melanogaster (Fruit fly).